The primary structure comprises 605 residues: Zinc metalloproteinase nas-34 (605 aa).

Residues 1–19 form the signal peptide; sequence MVSYWPVLIVLCLLPICHA. Positions 20–124 are excised as a propeptide; sequence KSYFADFVNG…EFLYAIRGKR (105 aa). One can recognise a Peptidase M12A domain in the interval 124 to 322; the sequence is RSMTSFLSER…VKRINFAYCN (199 aa). 2 disulfides stabilise this stretch: Cys-165-Cys-321 and Cys-191-Cys-211. His-219 contacts Zn(2+). The active site involves Glu-220. His-223 and His-229 together coordinate Zn(2+). One can recognise an EGF-like domain in the interval 317-357; sequence NFAYCNSTCSNYLDCQNGGYINPNDCNNCKCPPGFGGQLCD. N-linked (GlcNAc...) asparagine glycosylation occurs at Asn-322. Cystine bridges form between Cys-325/Cys-345, Cys-347/Cys-356, Cys-366/Cys-388, and Cys-415/Cys-436. The region spanning 366-469 is the CUB domain; sequence CGAGDITATS…ARFSLNYRYD (104 aa). A disordered region spans residues 479-526; it reads TTTSTTTTTAPITVPTVSPTTTTTRQTTTTARTSTTTTTTQAPPTTTT. The TSP type-1 domain maps to 525–566; sequence TTSTSQCASWSACSAQCGGCGTQSRRCGTYVETVYCNTNPCT. Cystine bridges form between Cys-531/Cys-551, Cys-537/Cys-560, and Cys-541/Cys-565.

Zn(2+) serves as cofactor. In terms of tissue distribution, expressed in hypodermal cells. First expressed in the dorsal and lateral surface area of the middle and posterior region of embryos. At later stages, it localizes to lateral surface regions, probably corresponding to hypodermal seam cells. In L1 larvae, it is expressed in seam cells and in a few cells anterior to the nerve ring.

It is found in the secreted. Functionally, metalloprotease. Required for normal hatching and migration of neuroblasts. May act by degrading eggshell proteins at hatching. This Caenorhabditis elegans protein is Zinc metalloproteinase nas-34 (hch-1).